The primary structure comprises 536 residues: Cytochrome P450 monooxygenase macC (536 aa).

The helical transmembrane segment at 2-22 (ALLYITTAALALLLLFLRAVF) threads the bilayer. Residue Cys448 coordinates heme.

The protein belongs to the cytochrome P450 family. Requires heme as cofactor.

The protein resides in the membrane. The protein operates within secondary metabolite biosynthesis; terpenoid biosynthesis. Functionally, cytochrome P450 monooxygenase; part of the gene cluster that mediates the biosynthesis of macrophorins, isoprenoid epoxycyclohexenones containing cyclized drimane moieties. The first step of the pathway is the synthesis of 6-methylsalicylic acid (6-MSA) by the polyketide synthase macA. 6-MSA is then converted to m-cresol by the decarboxylase macB. The cytochrome P450 monooxygenase macC then catalyzes the oxidation of m-cresol to toluquinol. Epoxidation of toluquinol is then performed by the short chain dehydrogenase macD, with the help of macE, and a further prenylation by macG leads to 7-deacetoxyyanuthone A. The next step is the hydroxylation of C-22 of 7-deacetoxyyanuthone A by the cytochrome P450 monooxygenase macH to yield 22-deacetylyanuthone A. O-Mevalon transferase macI then attaches mevalon to the hydroxyl group of 22-deacetylyanuthone A to produce yanuthone E. The terpene cyclase macJ catalyzes the cyclization of 22-deacetylyanuthone A to macrophorin A. MacJ is also able to catalyze cyclization of yanuthone E and 7-deacetoxyyanuthone A to their corresponding macrophorins. The macJ products can be further modified by macH and macJ, as well as by the FAD-dependent monooxygenase macF, to produce additional macrophorins, including 4'-oxomacrophorin A, 4'-oxomacrophorin D and 4'-oxomacrophorin E. This Penicillium terrestre protein is Cytochrome P450 monooxygenase macC.